The following is a 467-amino-acid chain: Asparagine--tRNA ligase (467 aa).

This sequence belongs to the class-II aminoacyl-tRNA synthetase family. As to quaternary structure, homodimer.

The protein resides in the cytoplasm. The catalysed reaction is tRNA(Asn) + L-asparagine + ATP = L-asparaginyl-tRNA(Asn) + AMP + diphosphate + H(+). This is Asparagine--tRNA ligase from Haemophilus ducreyi (strain 35000HP / ATCC 700724).